A 948-amino-acid polypeptide reads, in one-letter code: Non-lysosomal glucosylceramidase (948 aa).

The Extracellular portion of the chain corresponds to 1-736 (MAEPLAVETK…VMDGPSAYCS (736 aa)). Positions 177 to 195 (STRDKTSDPDGDPDGERTK) are enriched in basic and acidic residues. A disordered region spans residues 177 to 197 (STRDKTSDPDGDPDGERTKCQ). N200 carries N-linked (GlcNAc...) asparagine glycosylation. The residue at position 214 (S214) is a Phosphoserine. 3 N-linked (GlcNAc...) asparagine glycosylation sites follow: N288, N555, and N629. S667 and S669 each carry phosphoserine. The N-linked (GlcNAc...) asparagine glycan is linked to N673. Residues 737–753 (GLWLAALQAMSAMATIL) form a helical membrane-spanning segment. Topologically, residues 754–948 (DQPNDCLRYQ…ALERRRAQRD (195 aa)) are cytoplasmic.

The protein belongs to the non-lysosomal glucosylceramidase family.

It is found in the cell membrane. The catalysed reaction is a beta-D-glucosyl-(1&lt;-&gt;1')-N-acylsphing-4-enine + H2O = an N-acylsphing-4-enine + D-glucose. In terms of biological role, non-lysosomal glucosylceramidase that catalyzes the conversion of glucosylceramide to free glucose and ceramide. This chain is Non-lysosomal glucosylceramidase, found in Drosophila melanogaster (Fruit fly).